A 380-amino-acid polypeptide reads, in one-letter code: XK-related protein 9 (380 aa).

The next 8 membrane-spanning stretches (helical) occupy residues 10 to 30 (LLSA…AALV), 39 to 59 (VVCA…TQVF), 81 to 101 (LPVV…GIFI), 167 to 187 (CSLV…WALV), 228 to 248 (ALLL…WLLG), 264 to 284 (SLEF…FFNV), 294 to 314 (ITYY…LFVL), and 329 to 349 (TLMA…YLLL).

The protein belongs to the XK family.

The protein resides in the cell membrane. The enzyme catalyses a 1,2-diacyl-sn-glycero-3-phospho-L-serine(in) = a 1,2-diacyl-sn-glycero-3-phospho-L-serine(out). Phospholipid scramblase that promotes phosphatidylserine exposure on apoptotic cell surface. Phosphatidylserine is a specific marker only present at the surface of apoptotic cells and acts as a specific signal for engulfment. The sequence is that of XK-related protein 9 from Tetraodon nigroviridis (Spotted green pufferfish).